A 95-amino-acid polypeptide reads, in one-letter code: Small ribosomal subunit protein bS18 (95 aa).

The protein belongs to the bacterial ribosomal protein bS18 family. As to quaternary structure, part of the 30S ribosomal subunit. Forms a tight heterodimer with protein bS6.

Binds as a heterodimer with protein bS6 to the central domain of the 16S rRNA, where it helps stabilize the platform of the 30S subunit. The sequence is that of Small ribosomal subunit protein bS18 from Rickettsia canadensis (strain McKiel).